The following is a 609-amino-acid chain: Glutamine--fructose-6-phosphate aminotransferase [isomerizing] (609 aa).

The Nucleophile; for GATase activity role is filled by Cys2. One can recognise a Glutamine amidotransferase type-2 domain in the interval 2–217; that stretch reads CGIVGYIGRR…EGWLAELTPE (216 aa). SIS domains lie at 286–425 and 458–599; these read SAAE…QNGR and AAEA…VDKP. The active-site For Fru-6P isomerization activity is the Lys604.

Homodimer.

The protein localises to the cytoplasm. It catalyses the reaction D-fructose 6-phosphate + L-glutamine = D-glucosamine 6-phosphate + L-glutamate. Functionally, catalyzes the first step in hexosamine metabolism, converting fructose-6P into glucosamine-6P using glutamine as a nitrogen source. This Symbiobacterium thermophilum (strain DSM 24528 / JCM 14929 / IAM 14863 / T) protein is Glutamine--fructose-6-phosphate aminotransferase [isomerizing].